We begin with the raw amino-acid sequence, 412 residues long: Trafficking protein particle complex subunit 13 (412 aa).

Belongs to the TRAPPC13 family. As to quaternary structure, part of the multisubunit TRAPP (transport protein particle) complex.

This Danio rerio (Zebrafish) protein is Trafficking protein particle complex subunit 13 (trappc13).